Here is a 483-residue protein sequence, read N- to C-terminus: Glutamyl-tRNA(Gln) amidotransferase subunit A (483 aa).

Active-site charge relay system residues include Lys-76 and Ser-151. The active-site Acyl-ester intermediate is the Ser-175.

It belongs to the amidase family. GatA subfamily. In terms of assembly, heterotrimer of A, B and C subunits.

The enzyme catalyses L-glutamyl-tRNA(Gln) + L-glutamine + ATP + H2O = L-glutaminyl-tRNA(Gln) + L-glutamate + ADP + phosphate + H(+). Its function is as follows. Allows the formation of correctly charged Gln-tRNA(Gln) through the transamidation of misacylated Glu-tRNA(Gln) in organisms which lack glutaminyl-tRNA synthetase. The reaction takes place in the presence of glutamine and ATP through an activated gamma-phospho-Glu-tRNA(Gln). The sequence is that of Glutamyl-tRNA(Gln) amidotransferase subunit A from Pseudomonas fluorescens (strain Pf0-1).